We begin with the raw amino-acid sequence, 390 residues long: Transposase for insertion sequence element IS256 in transposon Tn4001 (390 aa).

Belongs to the transposase mutator family.

In terms of biological role, required for the transposition of the insertion element. In Enterococcus faecalis (strain ATCC 700802 / V583), this protein is Transposase for insertion sequence element IS256 in transposon Tn4001.